The chain runs to 449 residues: Protein trichome birefringence-like 35 (449 aa).

Residues L12–F29 form a helical; Signal-anchor for type II membrane protein membrane-spanning segment. Positions G185 to S187 match the GDS motif motif. The DCXHWCLPGXXDXWN motif motif lies at D428–N442.

This sequence belongs to the PC-esterase family. TBL subfamily.

The protein resides in the membrane. May act as a bridging protein that binds pectin and other cell wall polysaccharides. Probably involved in maintaining esterification of pectins. May be involved in the specific O-acetylation of cell wall polymers. This Arabidopsis thaliana (Mouse-ear cress) protein is Protein trichome birefringence-like 35 (TBL35).